The sequence spans 65 residues: Large ribosomal subunit protein uL30 (65 aa).

The protein belongs to the universal ribosomal protein uL30 family. In terms of assembly, part of the 50S ribosomal subunit.

The sequence is that of Large ribosomal subunit protein uL30 from Methylobacillus flagellatus (strain ATCC 51484 / DSM 6875 / VKM B-1610 / KT).